The primary structure comprises 464 residues: NADH dehydrogenase [ubiquinone] flavoprotein 1, mitochondrial (464 aa).

The transit peptide at Met-1–Phe-20 directs the protein to the mitochondrion. Position 81 is an N6-acetyllysine; alternate (Lys-81). Residue Lys-81 is modified to N6-succinyllysine; alternate. Residue Gly-87–Gly-96 participates in NADH binding. N6-acetyllysine is present on Lys-104. Residue Arg-199–Thr-247 coordinates FMN. Position 257 is an omega-N-methylarginine (Arg-257). The residue at position 375 (Lys-375) is an N6-acetyllysine. [4Fe-4S] cluster contacts are provided by Cys-379, Cys-382, Cys-385, and Cys-425.

Belongs to the complex I 51 kDa subunit family. Core subunit of respiratory chain NADH dehydrogenase (Complex I) which is composed of 45 different subunits. This is a component of the flavoprotein-sulfur (FP) fragment of the enzyme. Interacts with RAB5IF. Requires FMN as cofactor. It depends on [4Fe-4S] cluster as a cofactor.

It is found in the mitochondrion inner membrane. It catalyses the reaction a ubiquinone + NADH + 5 H(+)(in) = a ubiquinol + NAD(+) + 4 H(+)(out). Its function is as follows. Core subunit of the mitochondrial membrane respiratory chain NADH dehydrogenase (Complex I) which catalyzes electron transfer from NADH through the respiratory chain, using ubiquinone as an electron acceptor. Part of the peripheral arm of the enzyme, where the electrons from NADH are accepted by flavin mononucleotide (FMN) and then passed along a chain of iron-sulfur clusters by electron tunnelling to the final acceptor ubiquinone. Contains FMN, which is the initial electron acceptor as well as one iron-sulfur cluster. This chain is NADH dehydrogenase [ubiquinone] flavoprotein 1, mitochondrial, found in Mus musculus (Mouse).